We begin with the raw amino-acid sequence, 330 residues long: MALPVYYDKDIDLGVIQSLQVGIIGYGVQGEAQALNLRDSKVKVRIGLYQGSLSVSKAKKEGFEVLGVKELVQQSDVIMALLPDELHKEVLEKEVIPFLKEGQIIGFAHGFSVHFNQVVLPKGVGAILVAPKGPGSALREEYLKNRGLYHLIAIEQESSIHNAKAVALSYAKAMGGGRMGVLETSFKEECESDLFGEQAVLCGGLEAIVRMGFETLIKAGYPEELAYFECVHEVKLVADLLHYKGVEGLRKHISNTAEFGAIKAREPMGNLLEKRMQKILKKIQNGAFAKDFLLEKSLNYPRLNTERKALKETKIEQIGEILRAPFNHKK.

Residues 3–184 (LPVYYDKDID…GGGRMGVLET (182 aa)) enclose the KARI N-terminal Rossmann domain. Residues 26–29 (YGVQ), Ser52, and Ser54 each bind NADP(+). His109 is a catalytic residue. Gly135 provides a ligand contact to NADP(+). One can recognise a KARI C-terminal knotted domain in the interval 185-329 (SFKEECESDL…EILRAPFNHK (145 aa)). Residues Asp193, Glu197, Glu229, and Glu233 each coordinate Mg(2+). Ser254 is a substrate binding site.

Belongs to the ketol-acid reductoisomerase family. Mg(2+) is required as a cofactor.

It catalyses the reaction (2R)-2,3-dihydroxy-3-methylbutanoate + NADP(+) = (2S)-2-acetolactate + NADPH + H(+). The catalysed reaction is (2R,3R)-2,3-dihydroxy-3-methylpentanoate + NADP(+) = (S)-2-ethyl-2-hydroxy-3-oxobutanoate + NADPH + H(+). Its pathway is amino-acid biosynthesis; L-isoleucine biosynthesis; L-isoleucine from 2-oxobutanoate: step 2/4. The protein operates within amino-acid biosynthesis; L-valine biosynthesis; L-valine from pyruvate: step 2/4. Functionally, involved in the biosynthesis of branched-chain amino acids (BCAA). Catalyzes an alkyl-migration followed by a ketol-acid reduction of (S)-2-acetolactate (S2AL) to yield (R)-2,3-dihydroxy-isovalerate. In the isomerase reaction, S2AL is rearranged via a Mg-dependent methyl migration to produce 3-hydroxy-3-methyl-2-ketobutyrate (HMKB). In the reductase reaction, this 2-ketoacid undergoes a metal-dependent reduction by NADPH to yield (R)-2,3-dihydroxy-isovalerate. This chain is Ketol-acid reductoisomerase (NADP(+)), found in Helicobacter pylori (strain J99 / ATCC 700824) (Campylobacter pylori J99).